We begin with the raw amino-acid sequence, 569 residues long: MAGGAREVLTLQLGHFAGFVGAHWWNQQDAALGRATDAKESPGELCPDVLYRTGRTLHGQDTCTPRLILMDLKGSLSSLKEEGGLYRDKQLDAAIAWQGKLTTHKEELCPKNPYLQDFLSTEGVLSSDGVWRVKSIPNGKGSPPLTTATTPKPLIPTEASIRVWSDFLRVHLHPRSICMIQKYNHDGEAGRLEAFGQGESVLKEPKYQEELEDRLHFYVEECDYLQGFQILCDLHDGFSGVGAKAAELLQDEYSGRGIITWGLLPGPYHRGEAQRNIYRLLNTAFGLVHLTAHSSLVCPLSLGGSLGLRPEPPVNFPYLHYDATLPFHCSAILATALDTVTVPYRLCSSPVSMVHLADMLSFCGKKVVTAGATIPFPLAPGQSLPDSLMQFGGATPWTPLSACGEPSGTRCFAQSVVLRGIDRACHTSQLTPGTPPPSSLHACTTGEEVLAQYLQQQQPRVMSSSHLLLTPYRVAPPYPHLFSSCSPQGMVLDGSPKGAVESIPVFGALCSSSSLHQTLEALARDLTKLDLRRWASFMDAGVEHDDVAELLQELQSLAQCYHAGDSLVD.

Ser41 and Ser495 each carry phosphoserine.

Belongs to the misato family.

It is found in the mitochondrion outer membrane. The protein resides in the cytoplasm. Its function is as follows. Involved in the regulation of mitochondrial distribution and morphology. Required for mitochondrial fusion and mitochondrial network formation. This is Protein misato homolog 1 (MSTO1) from Macaca fascicularis (Crab-eating macaque).